The primary structure comprises 346 residues: GPALPP motifs-containing protein 1 (346 aa).

Disordered regions lie at residues 1 to 283 (MARD…ESLM) and 289 to 308 (KLKSKAAEDKNKHQERIPFD). Ala-2 is subject to N-acetylalanine. The short motif at 7–12 (GPALPP) is the GPALPP motif 1 element. Ser-28 carries the phosphoserine modification. Positions 32 to 37 (GPALPP) match the GPALPP motif 2 motif. Residues 60-69 (GNQESEEEDT) show a composition bias toward acidic residues. Residues 91-96 (GPALPP) carry the GPALPP motif 3 motif. The residue at position 104 (Ser-104) is a Phosphoserine. Residues 106-115 (PRPIIGPALP) show a composition bias toward pro residues. The GPALPP motif 4 motif lies at 111–116 (GPALPP). The segment covering 123-132 (QKNDKGREDP) has biased composition (basic and acidic residues). Residues Ser-136, Ser-141, and Ser-146 each carry the phosphoserine modification. Over residues 142 to 152 (EEAESGEDEDI) the composition is skewed to acidic residues. Composition is skewed to basic and acidic residues over residues 169-193 (EFEKRAQRMKEKLTKGDDDSSKPIT) and 233-267 (PADRERKAKEIQEARKSFSKKDEENILSGRDKRLA). Lys-277 is covalently cross-linked (Glycyl lysine isopeptide (Lys-Gly) (interchain with G-Cter in SUMO2)). The span at 293-308 (KAAEDKNKHQERIPFD) shows a compositional bias: basic and acidic residues. Residue Lys-314 forms a Glycyl lysine isopeptide (Lys-Gly) (interchain with G-Cter in SUMO2) linkage.

This is GPALPP motifs-containing protein 1 (Gpalpp1) from Mus musculus (Mouse).